A 223-amino-acid polypeptide reads, in one-letter code: Golgi to ER traffic protein 1 (223 aa).

A topological domain (lumenal) is located at residue methionine 1. Residues 2–21 (SWVVAIAVVFVVVLKVLEYS) traverse the membrane as a helical segment. Over 22 to 105 (TSYHDLVLQS…QIKGHLKKVK (84 aa)) the chain is Cytoplasmic. A coiled-coil region spans residues 56–105 (ENKSISAQDNYAKWTKNNRKLDKLDKEITELGAQLKAHNEQIKGHLKKVK). A helical transmembrane segment spans residues 106 to 126 (LLLLTVPFLCFKLWKGKHIVY). The Lumenal portion of the chain corresponds to 127 to 177 (NLPHHQMFPQLVAGVWSQGWLYLAILPLQLAKSIVTGSSFAIETASFPHMG). A helical transmembrane segment spans residues 178–194 (VSLGIWLWALNSVISNI). The Cytoplasmic segment spans residues 195–223 (EFMTMQLWAKPVSKPSKKLEIVTDEIKVD).

This sequence belongs to the WRB/GET1 family. In terms of assembly, component of the Golgi to ER traffic (GET) complex, which is composed of GET1, GET2 and GET3. Within the complex, GET1 and GET2 form a heterotetramer which is stabilized by phosphatidylinositol binding and which binds to the GET3 homodimer.

Its subcellular location is the endoplasmic reticulum membrane. It localises to the golgi apparatus membrane. In terms of biological role, required for the post-translational delivery of tail-anchored (TA) proteins to the endoplasmic reticulum. Together with GET2, acts as a membrane receptor for soluble GET3, which recognizes and selectively binds the transmembrane domain of TA proteins in the cytosol. The GET complex cooperates with the HDEL receptor ERD2 to mediate the ATP-dependent retrieval of resident ER proteins that contain a C-terminal H-D-E-L retention signal from the Golgi to the ER. This Candida glabrata (strain ATCC 2001 / BCRC 20586 / JCM 3761 / NBRC 0622 / NRRL Y-65 / CBS 138) (Yeast) protein is Golgi to ER traffic protein 1.